The sequence spans 399 residues: Elongation factor Tu (399 aa).

Positions 10–208 (KPHVNIGTIG…TVDSYIPEPE (199 aa)) constitute a tr-type G domain. The interval 19–26 (GHVDHGKT) is G1. 19–26 (GHVDHGKT) contacts GTP. Thr-26 contacts Mg(2+). Positions 64 to 68 (GITIN) are G2. Residues 85 to 88 (DAPG) form a G3 region. Residues 85 to 89 (DAPGH) and 140 to 143 (NKVD) contribute to the GTP site. The interval 140–143 (NKVD) is G4. Positions 178 to 180 (SAL) are G5.

Belongs to the TRAFAC class translation factor GTPase superfamily. Classic translation factor GTPase family. EF-Tu/EF-1A subfamily. In terms of assembly, monomer.

Its subcellular location is the cytoplasm. The enzyme catalyses GTP + H2O = GDP + phosphate + H(+). In terms of biological role, GTP hydrolase that promotes the GTP-dependent binding of aminoacyl-tRNA to the A-site of ribosomes during protein biosynthesis. This chain is Elongation factor Tu, found in Streptococcus pyogenes serotype M12 (strain MGAS2096).